Consider the following 738-residue polypeptide: Glucan 1,4-alpha-glucosidase SusB (738 aa).

The signal sequence occupies residues 1 to 21 (MKKRKILSLIAFLCISFIANA). Ca(2+) is bound at residue Glu194. Substrate is bound by residues 215-217 (PNS), 437-439 (HHE), and 507-508 (HE). Residues Glu508, Glu526, and Glu532 each coordinate Ca(2+). Glu532 functions as the Proton donor/acceptor in the catalytic mechanism.

This sequence belongs to the glycosyl hydrolase 97 family. As to quaternary structure, monomer. Ca(2+) serves as cofactor.

It localises to the periplasm. It carries out the reaction Hydrolysis of terminal (1-&gt;4)-linked alpha-D-glucose residues successively from non-reducing ends of the chains with release of beta-D-glucose.. Its pathway is glycan degradation; starch degradation. Functionally, glucoamylase that hydrolyzes alpha-1,4-glucosidic linkages, alpha-1,6-, alpha-1,3- and alpha-1,2-glucosidic linkages during starch degradation. The protein is Glucan 1,4-alpha-glucosidase SusB (susB) of Bacteroides thetaiotaomicron (strain ATCC 29148 / DSM 2079 / JCM 5827 / CCUG 10774 / NCTC 10582 / VPI-5482 / E50).